The following is a 475-amino-acid chain: MCGMVSATRWETAIEVTPWIAAIAEQVPLFGTDGIRGRVGEHLTAPLAQQVGFWTGQVLRQAGGDRGPVVVGQDSRNSSNMLAMALSSGLAAAGVEVLHLGLCPTPGVAYLTHHSEAIGGVMISASHNPPGDNGIKVFGADGSKLDRQLQAAIEAGLRGQQTSLPATTWGQHYYQPQLADHYQAAIAQSLGQRANLQGLKIVLDLAWGAAALLAPRLFRELGAEVIALHDLPDGNQINVNCGSTHLARLQAAVLEQGADMGFAFDGDADRVLAVDGRGRSVDGDHILFLWGRELEQQQQLPGQAIVTTVMANLGFERAWQAVGGEFVRTAVGDQYVQAEMQARGAMLGGEQSGHILCRHYALTGDGTLTAAHVAALVQASGVSLADLVDQSFRPYPQLLRNVRVEDRDRRCNWQNCAALTQAIAAAETDMGDRGRVLVRASGTEPLLRIMVEAEEAQQVEHWTTHLVQVAESHLL.

Catalysis depends on Ser-126, which acts as the Phosphoserine intermediate. Positions 126, 265, 267, and 269 each coordinate Mg(2+). A Phosphoserine modification is found at Ser-126.

This sequence belongs to the phosphohexose mutase family. Mg(2+) is required as a cofactor. In terms of processing, activated by phosphorylation.

It catalyses the reaction alpha-D-glucosamine 1-phosphate = D-glucosamine 6-phosphate. In terms of biological role, catalyzes the conversion of glucosamine-6-phosphate to glucosamine-1-phosphate. This chain is Phosphoglucosamine mutase, found in Synechococcus sp. (strain ATCC 27144 / PCC 6301 / SAUG 1402/1) (Anacystis nidulans).